We begin with the raw amino-acid sequence, 196 residues long: Interleukin-18 (196 aa).

The propeptide occupies 1-29 (MSCEEIAVCAVRLRENLCLYFEELECDAF).

It belongs to the IL-1 family. Forms a ternary complex with ligand-binding receptor subunit IL18R1 and signaling receptor subunit IL18RAP at the plasma membrane. Mature IL18 first binds to IL18R1 forming a low affinity binary complex, which then interacts with IL18RAP to form a high affinity ternary complex that signals inside the cell. Interacts with cargo receptor TMED10; the interaction mediates the translocation from the cytoplasm into the ERGIC (endoplasmic reticulum-Golgi intermediate compartment) and thereby secretion. Post-translationally, the pro-IL-18 precursor is processed by CASP1 or CASP4 to yield the active form.

The protein localises to the cytoplasm. Its subcellular location is the secreted. Functionally, augments natural killer cell activity in spleen cells and stimulates interferon gamma production in T-helper type I cells. Involved in transduction of inflammation downstream of pyroptosis: its mature form is specifically released in the extracellular milieu by passing through the gasdermin-D (GSDMD) pore. This Gallus gallus (Chicken) protein is Interleukin-18 (IL18).